The sequence spans 440 residues: Ultraviolet-B receptor UVR8 (440 aa).

At Ala2 the chain carries N-acetylalanine. RCC1 repeat units follow at residues 2–31 (AEDMAADEVTAPPRKVLIISAGASHSVALL), 32–84 (SGDI…AYSQ), 86–137 (GMEV…AVTM), 139–189 (GEVQ…AVTE), 190–241 (DGDL…SVSY), 243–293 (GALY…ALTS), 294–345 (DGKL…AVTE), and 347–399 (NNVF…SGKS). Positions 397–423 (GKSWVSPAERYAVVPDETGLTDGSSKG) are required for interaction with COP1. The disordered stretch occupies residues 413–440 (ETGLTDGSSKGNGGDISVPQTDVKRVRI).

Homodimer in the absence of UV-B, but absorption of UV-B induces monomerization of UVR8 and interaction with COP1. Interacts with RUP1, RUP2 and histone H2B.

The protein resides in the nucleus. It localises to the cytoplasm. Its subcellular location is the cytosol. Functionally, UV-B specific signaling component that acts as a UV-B photoreceptor and plays a key role in establishing UV-protective responses in plants. Upon UV-B irradiation, UVR8 undergoes an immediate switch from homodimer to monomer, accumulates in the nucleus, interacts with the photomorphogenic repressor COP1 and regulates the expression of the transcription factor HY5 by associating with chromatin (through histone H2B binding) in the HY5 promoter region. UVR8 is involved in controlling aspects of leaf growth and morphogenesis in response to UV-B, is required for normal progression of endocycle and has a regulatory role in stomatal differentiation. Is required for plant circadian clock response to photomorphogenic UV-B light, partly through the transcriptional activation of responsive clock genes. Promotes photosynthetic efficiency at elevated levels of UV-B. Plays a role in mediating the effects of UV-B radiation on pathogen resistance by controlling the expression of the sinapate biosynthetic pathway. The two tryptophans, Trp-285 and Trp-233, serve collectively as the UV-B chromophore. In Arabidopsis thaliana (Mouse-ear cress), this protein is Ultraviolet-B receptor UVR8.